We begin with the raw amino-acid sequence, 187 residues long: Protein GrpE (187 aa).

The disordered stretch occupies residues 1–26 (MNDLKNAENGPDEADTPQGAPSQEPD).

Belongs to the GrpE family. Homodimer.

Its subcellular location is the cytoplasm. Functionally, participates actively in the response to hyperosmotic and heat shock by preventing the aggregation of stress-denatured proteins, in association with DnaK and GrpE. It is the nucleotide exchange factor for DnaK and may function as a thermosensor. Unfolded proteins bind initially to DnaJ; upon interaction with the DnaJ-bound protein, DnaK hydrolyzes its bound ATP, resulting in the formation of a stable complex. GrpE releases ADP from DnaK; ATP binding to DnaK triggers the release of the substrate protein, thus completing the reaction cycle. Several rounds of ATP-dependent interactions between DnaJ, DnaK and GrpE are required for fully efficient folding. The protein is Protein GrpE of Methylocella silvestris (strain DSM 15510 / CIP 108128 / LMG 27833 / NCIMB 13906 / BL2).